A 346-amino-acid chain; its full sequence is Annexin A1 (346 aa).

Ala2 is modified (N-acetylalanine). Phosphoserine; by TRPM7 is present on Ser5. Gln19 is covalently cross-linked (Isoglutamyl lysine isopeptide (Gln-Lys) (interchain with K-?)). Tyr21 bears the Phosphotyrosine; by EGFR mark. Phosphoserine is present on residues Ser34 and Ser37. Thr41 is subject to Phosphothreonine. 4 Annexin repeats span residues 42–113 (FNPS…ALLK), 114–185 (TPAQ…SLAK), 197–269 (DLAD…VIVK), and 273–344 (SQPM…ALCG). Lys58 is subject to N6-acetyllysine. Positions 59, 60, 62, 97, 100, 105, 127, 129, 131, 132, and 134 each coordinate Ca(2+). A Phosphothreonine modification is found at Thr136. Ca(2+) is bound by residues Asp171, Gly210, and Arg213. Residue Lys214 forms a Glycyl lysine isopeptide (Lys-Gly) (interchain with G-Cter in SUMO1); alternate linkage. Lys214 is covalently cross-linked (Glycyl lysine isopeptide (Lys-Gly) (interchain with G-Cter in SUMO2); alternate). Gly215 lines the Ca(2+) pocket. At Lys239 the chain carries N6-acetyllysine. 3 residues coordinate Ca(2+): Asp253, Glu255, and Leu256. Lys257 participates in a covalent cross-link: Glycyl lysine isopeptide (Lys-Gly) (interchain with G-Cter in SUMO1). Glu261, Met286, Gly288, and Gly290 together coordinate Ca(2+). Position 312 is an N6-acetyllysine (Lys312). Cys324 and Cys343 form a disulfide bridge. Ca(2+) is bound by residues Leu328, Glu330, and Thr331. A Glycyl lysine isopeptide (Lys-Gly) (interchain with G-Cter in SUMO1) cross-link involves residue Lys332. Glu336 is a Ca(2+) binding site.

The protein belongs to the annexin family. As to quaternary structure, homodimer; non-covalently linked. Homodimer; linked by transglutamylation. Homodimers linked by transglutamylation are observed in placenta, but not in other tissues. Interacts with S100A11. Heterotetramer, formed by two molecules each of S100A11 and ANXA1. Interacts with DYSF. Interacts with EGFR. In terms of processing, phosphorylated by protein kinase C, EGFR and TRPM7. Phosphorylated in response to EGF treatment. Sumoylated. Post-translationally, proteolytically cleaved by cathepsin CTSG to release the active N-terminal peptide Ac2-26. As to expression, detected on surface epithelia and mucosal glands in nasal cavity, trachea, bronchi and bronchioles. Detected in blood vessel endothelial cells. Detected in neutrophils (at protein level).

It localises to the nucleus. The protein resides in the cytoplasm. It is found in the cell projection. Its subcellular location is the cilium. The protein localises to the basolateral cell membrane. It localises to the lateral cell membrane. The protein resides in the cell membrane. It is found in the apical cell membrane. Its subcellular location is the membrane. The protein localises to the endosome membrane. It localises to the secreted. The protein resides in the extracellular space. It is found in the early endosome. Its subcellular location is the cytoplasmic vesicle membrane. The protein localises to the extracellular exosome. It localises to the cytoplasmic vesicle. The protein resides in the secretory vesicle lumen. It is found in the phagocytic cup. Functionally, plays important roles in the innate immune response as effector of glucocorticoid-mediated responses and regulator of the inflammatory process. Has anti-inflammatory activity. Plays a role in glucocorticoid-mediated down-regulation of the early phase of the inflammatory response. Contributes to the adaptive immune response by enhancing signaling cascades that are triggered by T-cell activation, regulates differentiation and proliferation of activated T-cells. Promotes the differentiation of T-cells into Th1 cells and negatively regulates differentiation into Th2 cells. Has no effect on unstimulated T-cells. Negatively regulates hormone exocytosis via activation of the formyl peptide receptors and reorganization of the actin cytoskeleton. Has high affinity for Ca(2+) and can bind up to eight Ca(2+) ions. Displays Ca(2+)-dependent binding to phospholipid membranes. Plays a role in the formation of phagocytic cups and phagosomes. Plays a role in phagocytosis by mediating the Ca(2+)-dependent interaction between phagosomes and the actin cytoskeleton. Functions at least in part by activating the formyl peptide receptors and downstream signaling cascades. Promotes chemotaxis of granulocytes and monocytes via activation of the formyl peptide receptors. Promotes rearrangement of the actin cytoskeleton, cell polarization and cell migration. Promotes resolution of inflammation and wound healing. Acts via neutrophil N-formyl peptide receptors to enhance the release of CXCL2. The chain is Annexin A1 (ANXA1) from Bos taurus (Bovine).